A 427-amino-acid polypeptide reads, in one-letter code: 3-phosphoshikimate 1-carboxyvinyltransferase (427 aa).

3-phosphoshikimate contacts are provided by lysine 20, serine 21, and arginine 25. Phosphoenolpyruvate is bound at residue lysine 20. Residues glycine 92 and arginine 120 each contribute to the phosphoenolpyruvate site. 3-phosphoshikimate contacts are provided by serine 166, glutamine 168, aspartate 312, and lysine 339. Glutamine 168 is a binding site for phosphoenolpyruvate. Aspartate 312 acts as the Proton acceptor in catalysis. Residues arginine 343 and arginine 385 each coordinate phosphoenolpyruvate.

This sequence belongs to the EPSP synthase family. Monomer.

The protein localises to the cytoplasm. It catalyses the reaction 3-phosphoshikimate + phosphoenolpyruvate = 5-O-(1-carboxyvinyl)-3-phosphoshikimate + phosphate. It participates in metabolic intermediate biosynthesis; chorismate biosynthesis; chorismate from D-erythrose 4-phosphate and phosphoenolpyruvate: step 6/7. Catalyzes the transfer of the enolpyruvyl moiety of phosphoenolpyruvate (PEP) to the 5-hydroxyl of shikimate-3-phosphate (S3P) to produce enolpyruvyl shikimate-3-phosphate and inorganic phosphate. The polypeptide is 3-phosphoshikimate 1-carboxyvinyltransferase (Streptococcus equi subsp. zooepidemicus (strain MGCS10565)).